A 475-amino-acid polypeptide reads, in one-letter code: Tetratricopeptide repeat protein 29 (475 aa).

TPR repeat units lie at residues 92 to 131, 136 to 173, 182 to 215, 234 to 267, 274 to 307, 314 to 347, and 354 to 387; these read DALR…EDAE, FEDV…AQLI, AEAH…TQGR, LRTY…AKEG, AEAS…STDL, GRGY…ARNN, and VRAS…TVEL. The tract at residues 437–475 is disordered; sequence IEPDPVTEEFRGSTVEAVSQNSERLEELSRFPGDQKNET. The span at 459 to 475 shows a compositional bias: basic and acidic residues; the sequence is ERLEELSRFPGDQKNET.

Expressed in spermatozoa (at protein level).

The protein localises to the cytoplasm. It is found in the cytoskeleton. It localises to the flagellum axoneme. Axonemal protein which is implicated in axonemal and/or peri-axonemal structure assembly and regulates flagellum assembly and beating and therefore sperm motility. The polypeptide is Tetratricopeptide repeat protein 29 (TTC29) (Homo sapiens (Human)).